The following is a 145-amino-acid chain: Putative antiporter subunit mnhG2 (145 aa).

The next 3 helical transmembrane spans lie at 11–31, 51–71, and 72–92; these read IAAV…IGIV, VLLT…FFSV, and RLLL…HLVA.

This sequence belongs to the CPA3 antiporters (TC 2.A.63) subunit G family. In terms of assembly, may form a heterooligomeric complex that consists of seven subunits: mnhA2, mnhB2, mnhC2, mnhD2, mnhE2, mnhF2 and mnhG2.

It localises to the cell membrane. The sequence is that of Putative antiporter subunit mnhG2 (mnhG2) from Staphylococcus aureus (strain MRSA252).